The chain runs to 60 residues: Large ribosomal subunit protein bL32A (60 aa).

Residues 1-19 (MAVPKRRMSRSNTRSRRSQ) are compositionally biased toward basic residues. A disordered region spans residues 1-21 (MAVPKRRMSRSNTRSRRSQWK).

Belongs to the bacterial ribosomal protein bL32 family.

In Nocardia farcinica (strain IFM 10152), this protein is Large ribosomal subunit protein bL32A.